Consider the following 177-residue polypeptide: Large ribosomal subunit protein uL6 (177 aa).

The protein belongs to the universal ribosomal protein uL6 family. In terms of assembly, part of the 50S ribosomal subunit.

Its function is as follows. This protein binds to the 23S rRNA, and is important in its secondary structure. It is located near the subunit interface in the base of the L7/L12 stalk, and near the tRNA binding site of the peptidyltransferase center. This is Large ribosomal subunit protein uL6 from Methylobacillus flagellatus (strain ATCC 51484 / DSM 6875 / VKM B-1610 / KT).